Here is a 185-residue protein sequence, read N- to C-terminus: Peptidyl-tRNA hydrolase (185 aa).

Tyrosine 14 contacts tRNA. The active-site Proton acceptor is the histidine 19. TRNA-binding residues include tyrosine 65, asparagine 67, and asparagine 113.

Belongs to the PTH family. Monomer.

The protein resides in the cytoplasm. It catalyses the reaction an N-acyl-L-alpha-aminoacyl-tRNA + H2O = an N-acyl-L-amino acid + a tRNA + H(+). Functionally, hydrolyzes ribosome-free peptidyl-tRNAs (with 1 or more amino acids incorporated), which drop off the ribosome during protein synthesis, or as a result of ribosome stalling. In terms of biological role, catalyzes the release of premature peptidyl moieties from peptidyl-tRNA molecules trapped in stalled 50S ribosomal subunits, and thus maintains levels of free tRNAs and 50S ribosomes. This chain is Peptidyl-tRNA hydrolase, found in Rickettsia akari (strain Hartford).